The following is a 372-amino-acid chain: Queuine tRNA-ribosyltransferase (372 aa).

The Proton acceptor role is filled by D89. Residues 89–93 (DSGGF), D161, and G232 each bind substrate. Residues 262 to 268 (GIGDLPS) form an RNA binding region. The Nucleophile role is filled by D281. An RNA binding; important for wobble base 34 recognition region spans residues 286–290 (TKAAR). C319, C321, C324, and H351 together coordinate Zn(2+).

The protein belongs to the queuine tRNA-ribosyltransferase family. As to quaternary structure, homodimer. Within each dimer, one monomer is responsible for RNA recognition and catalysis, while the other monomer binds to the replacement base PreQ1. The cofactor is Zn(2+).

It catalyses the reaction 7-aminomethyl-7-carbaguanine + guanosine(34) in tRNA = 7-aminomethyl-7-carbaguanosine(34) in tRNA + guanine. It functions in the pathway tRNA modification; tRNA-queuosine biosynthesis. In terms of biological role, catalyzes the base-exchange of a guanine (G) residue with the queuine precursor 7-aminomethyl-7-deazaguanine (PreQ1) at position 34 (anticodon wobble position) in tRNAs with GU(N) anticodons (tRNA-Asp, -Asn, -His and -Tyr). Catalysis occurs through a double-displacement mechanism. The nucleophile active site attacks the C1' of nucleotide 34 to detach the guanine base from the RNA, forming a covalent enzyme-RNA intermediate. The proton acceptor active site deprotonates the incoming PreQ1, allowing a nucleophilic attack on the C1' of the ribose to form the product. After dissociation, two additional enzymatic reactions on the tRNA convert PreQ1 to queuine (Q), resulting in the hypermodified nucleoside queuosine (7-(((4,5-cis-dihydroxy-2-cyclopenten-1-yl)amino)methyl)-7-deazaguanosine). The chain is Queuine tRNA-ribosyltransferase from Chlamydia caviae (strain ATCC VR-813 / DSM 19441 / 03DC25 / GPIC) (Chlamydophila caviae).